A 106-amino-acid polypeptide reads, in one-letter code: NADH dehydrogenase [ubiquinone] iron-sulfur protein 5 (106 aa).

The CHCH domain occupies 30 to 74 (AGRCHAFEKEWIECAHGIGYTRAEKECKIEYDDFVECLLRQKTMR). Short sequence motifs (cx9C motif) lie at residues 33–43 (CHAFEKEWIEC) and 56–66 (CKIEYDDFVEC). 2 disulfide bridges follow: Cys33-Cys66 and Cys43-Cys56. The interval 84-106 (DKLIKEGKYTPPPHHIGKGEPRP) is disordered.

This sequence belongs to the complex I NDUFS5 subunit family. As to quaternary structure, mammalian complex I is composed of 45 different subunits. This is a component of the iron-sulfur (IP) fragment of the enzyme.

The protein resides in the mitochondrion inner membrane. It is found in the mitochondrion intermembrane space. Its function is as follows. Accessory subunit of the mitochondrial membrane respiratory chain NADH dehydrogenase (Complex I), that is believed not to be involved in catalysis. Complex I functions in the transfer of electrons from NADH to the respiratory chain. The immediate electron acceptor for the enzyme is believed to be ubiquinone. This Homo sapiens (Human) protein is NADH dehydrogenase [ubiquinone] iron-sulfur protein 5 (NDUFS5).